The sequence spans 212 residues: Large ribosomal subunit protein uL4 (212 aa).

The protein belongs to the universal ribosomal protein uL4 family. Part of the 50S ribosomal subunit.

One of the primary rRNA binding proteins, this protein initially binds near the 5'-end of the 23S rRNA. It is important during the early stages of 50S assembly. It makes multiple contacts with different domains of the 23S rRNA in the assembled 50S subunit and ribosome. In terms of biological role, forms part of the polypeptide exit tunnel. This chain is Large ribosomal subunit protein uL4, found in Phenylobacterium zucineum (strain HLK1).